A 419-amino-acid chain; its full sequence is Metacaspase-1 (419 aa).

A disordered region spans residues 1 to 109 (MSGYPGYNNG…PPQGMHAFGQ (109 aa)). Pro residues-rich tracts occupy residues 18–37 (QYPP…PPPQ) and 45–61 (QPPP…PPPQ). Over residues 83 to 95 (SVNSNAYTNGNQN) the composition is skewed to polar residues. Residues His210 and Cys266 contribute to the active site.

It belongs to the peptidase C14B family.

In terms of biological role, involved in cell death (apoptosis). In Botryotinia fuckeliana (strain B05.10) (Noble rot fungus), this protein is Metacaspase-1 (casA).